A 94-amino-acid polypeptide reads, in one-letter code: Small polypeptide ROTUNDIFOLIA LIKE 1 (94 aa).

Polar residues predominate over residues 1–13 (MRQCASASSSTSR). Positions 1 to 26 (MRQCASASSSTSRPPEAAGEEGKRRR) are disordered. Residues 28–59 (RRGWLLQAAAREQRSRFYIFRRCVAMLLCWYK) form a required for DVL/RTFL small polypeptide activity region. The chain crosses the membrane as a helical span at residues 63 to 82 (ITPYNVVPLGIYGLVWFATM).

It belongs to the DVL/RTFL small polypeptides family.

It is found in the cell membrane. Its function is as follows. Small polypeptide acting as a regulatory molecule which coordinates cellular responses required for differentiation, growth and development, probably by restricting polar cell proliferation in lateral organs. In Oryza sativa subsp. japonica (Rice), this protein is Small polypeptide ROTUNDIFOLIA LIKE 1.